Reading from the N-terminus, the 120-residue chain is Large ribosomal subunit protein uL24 (120 aa).

It belongs to the universal ribosomal protein uL24 family. As to quaternary structure, part of the 50S ribosomal subunit.

In terms of biological role, one of two assembly initiator proteins, it binds directly to the 5'-end of the 23S rRNA, where it nucleates assembly of the 50S subunit. Functionally, one of the proteins that surrounds the polypeptide exit tunnel on the outside of the subunit. In Pseudarthrobacter chlorophenolicus (strain ATCC 700700 / DSM 12829 / CIP 107037 / JCM 12360 / KCTC 9906 / NCIMB 13794 / A6) (Arthrobacter chlorophenolicus), this protein is Large ribosomal subunit protein uL24.